A 636-amino-acid chain; its full sequence is DNA mismatch repair protein MutL (636 aa).

Residues 341–420 form a disordered region; the sequence is APLINKPEQQ…PGAEEYTPEA (80 aa). Over residues 348–358 the composition is skewed to basic and acidic residues; the sequence is EQQKLDFDQVR.

Belongs to the DNA mismatch repair MutL/HexB family.

In terms of biological role, this protein is involved in the repair of mismatches in DNA. It is required for dam-dependent methyl-directed DNA mismatch repair. May act as a 'molecular matchmaker', a protein that promotes the formation of a stable complex between two or more DNA-binding proteins in an ATP-dependent manner without itself being part of a final effector complex. This chain is DNA mismatch repair protein MutL, found in Bacillus licheniformis (strain ATCC 14580 / DSM 13 / JCM 2505 / CCUG 7422 / NBRC 12200 / NCIMB 9375 / NCTC 10341 / NRRL NRS-1264 / Gibson 46).